We begin with the raw amino-acid sequence, 914 residues long: Penicillin-binding protein 1A/1B (914 aa).

Positions 1–29 (MSDQFNSREARRKANSKSSPSPKKGKKRK) are disordered. Over 1-37 (MSDQFNSREARRKANSKSSPSPKKGKKRKKGGLFKKT) the chain is Cytoplasmic. The helical; Signal-anchor for type II membrane protein transmembrane segment at 38-58 (LFTLLILFVLGVVGGAVTFAV) threads the bilayer. The Extracellular segment spans residues 59 to 914 (MVSDAPSLDE…TNSSSIEKTN (856 aa)). The transglycosylase stretch occupies residues 77 to 246 (STIYDKNGKE…TAYNPVKNPD (170 aa)). The Proton donor; for transglycosylase activity role is filled by Glu115. The interval 329-662 (TKAQDKLDEL…PDSVVEATVE (334 aa)) is transpeptidase. Ser390 acts as the Acyl-ester intermediate; for transpeptidase activity in catalysis. The Fibronectin type-III domain occupies 708 to 795 (KLSGLNVKYD…SYEVPKAEDD (88 aa)). Residues 773–914 (TAVSDDGKST…TNSSSIEKTN (142 aa)) are disordered. Positions 798 to 828 (KKDQQQTDDEKQDDEKTQDDTQTDDSQKDDG) are enriched in basic and acidic residues. Positions 829–840 (QTDQDQTDDSTN) are enriched in acidic residues. 2 stretches are compositionally biased toward low complexity: residues 848-892 (NTNT…GSDT) and 900-914 (SNKTQTNSSSIEKTN).

This sequence in the N-terminal section; belongs to the glycosyltransferase 51 family. It in the C-terminal section; belongs to the transpeptidase family. Post-translationally, the product expressed from the translation of the ponA gene appears as two bands on a gel (1A and 1B), but the specific amino acid sequence of each protein is unknown. In terms of processing, the N-terminus is blocked.

The protein resides in the cell membrane. It is found in the forespore inner membrane. It catalyses the reaction [GlcNAc-(1-&gt;4)-Mur2Ac(oyl-L-Ala-gamma-D-Glu-L-Lys-D-Ala-D-Ala)](n)-di-trans,octa-cis-undecaprenyl diphosphate + beta-D-GlcNAc-(1-&gt;4)-Mur2Ac(oyl-L-Ala-gamma-D-Glu-L-Lys-D-Ala-D-Ala)-di-trans,octa-cis-undecaprenyl diphosphate = [GlcNAc-(1-&gt;4)-Mur2Ac(oyl-L-Ala-gamma-D-Glu-L-Lys-D-Ala-D-Ala)](n+1)-di-trans,octa-cis-undecaprenyl diphosphate + di-trans,octa-cis-undecaprenyl diphosphate + H(+). It carries out the reaction Preferential cleavage: (Ac)2-L-Lys-D-Ala-|-D-Ala. Also transpeptidation of peptidyl-alanyl moieties that are N-acyl substituents of D-alanine.. Its pathway is cell wall biogenesis; peptidoglycan biosynthesis. Its function is as follows. Cell wall formation. Synthesis of cross-linked peptidoglycan from the lipid intermediates. The enzyme has a penicillin-insensitive transglycosylase N-terminal domain (formation of linear glycan strands) and a penicillin-sensitive transpeptidase C-terminal domain (cross-linking of the peptide subunits). Required for vegetative growth. Has a partially redundant function with PBP-2A (pbpA) during spore outgrowth. This is Penicillin-binding protein 1A/1B (ponA) from Bacillus subtilis (strain 168).